A 262-amino-acid chain; its full sequence is DNA-directed RNA polymerase subunit Rpo3 (262 aa).

It belongs to the archaeal Rpo3/eukaryotic RPB3 RNA polymerase subunit family. Part of the RNA polymerase complex.

It is found in the cytoplasm. It catalyses the reaction RNA(n) + a ribonucleoside 5'-triphosphate = RNA(n+1) + diphosphate. In terms of biological role, DNA-dependent RNA polymerase (RNAP) catalyzes the transcription of DNA into RNA using the four ribonucleoside triphosphates as substrates. The chain is DNA-directed RNA polymerase subunit Rpo3 from Pyrobaculum neutrophilum (strain DSM 2338 / JCM 9278 / NBRC 100436 / V24Sta) (Thermoproteus neutrophilus).